The sequence spans 88 residues: Small integral membrane protein 13 (88 aa).

A helical transmembrane segment spans residues leucine 10–valine 30. A compositionally biased stretch (polar residues) spans threonine 48–glycine 60. The segment at threonine 48–histidine 88 is disordered. A phosphoserine mark is found at serine 59, serine 61, and serine 70. Positions histidine 72–arginine 81 are enriched in basic residues.

This sequence belongs to the SMIM13 family.

It is found in the membrane. This is Small integral membrane protein 13 (Smim13) from Rattus norvegicus (Rat).